Consider the following 322-residue polypeptide: Cysteine protease YopT (322 aa).

Catalysis depends on residues cysteine 139, histidine 258, and aspartate 274.

The protein belongs to the peptidase C58 family. As to quaternary structure, interacts with human ARHA.

The protein resides in the secreted. Cysteine protease, which is translocated into infected cells and plays a central role in pathogenesis by cleaving the C-terminus end of the human small GTPase RhoA/ARHA, a regulator of cytoskeleton. Once cleaved, ARHA loses its lipid modification, and is released from the cell membrane, leading to the subsequent disruption of actin cytoskeleton of the host cell. The chain is Cysteine protease YopT (yopT) from Yersinia pseudotuberculosis serotype I (strain IP32953).